A 417-amino-acid chain; its full sequence is Ankyrin repeat and SAM domain-containing protein 4B (417 aa).

The tract at residues Met1–Leu252 is mediates localization to microvilli. ANK repeat units follow at residues Asp31 to Arg60, Trp64 to Ala93, and Asp97 to Ile126. Residues Lys130–Thr164 are a coiled coil. The disordered stretch occupies residues Glu151–Gly195. The segment covering Gly171–Ala190 has biased composition (polar residues). The mediates interaction with MYO7B stretch occupies residues Ser253–Thr346. Ser283 is modified (phosphoserine). The disordered stretch occupies residues Arg305–Pro330. Over residues Glu310 to Glu322 the composition is skewed to acidic residues. The 53-residue stretch at Phe351–Lys403 folds into the SAM domain. Positions Thr415–Leu417 match the PDZ-binding; mediates interaction with USH1C motif.

As to quaternary structure, part of the IMAC/intermicrovillar adhesion complex/intermicrovillar tip-link complex composed of ANKS4B, MYO7B, USH1C, CDHR2 and CDHR5. Interacts with USH1C; the interaction is direct and is required for ANKS4B localization to the tip of microvilli. Interacts with MYO7B; the interaction is direct. May interact with HSPA5. Expressed in kidney and small intestine.

The protein localises to the cell projection. The protein resides in the microvillus. As part of the intermicrovillar adhesion complex/IMAC plays a role in epithelial brush border differentiation, controlling microvilli organization and length. Plays a role in assembly of the complex. May play a role in cellular response to endoplasmic reticulum stress. The sequence is that of Ankyrin repeat and SAM domain-containing protein 4B from Homo sapiens (Human).